The sequence spans 480 residues: CASP8 and FADD-like apoptosis regulator (480 aa).

2 DED domains span residues 1-73 (MSAE…RILK) and 92-170 (DYRV…KIQK). The tract at residues 1–195 (MSAEVIHQVE…LQAAIQKSFK (195 aa)) is interaction with CASP8. The interval 1 to 227 (MSAEVIHQVE…GTQQEPVKKS (227 aa)) is interaction with FADD. Residues 1 to 305 (MSAEVIHQVE…FACMPEHRDY (305 aa)) form an interaction with CASP8 propeptide region. The interval 1 to 435 (MSAEVIHQVE…CLSQKLRQER (435 aa)) is not proteolytically processed and involved in apoptosis inhibition. The tract at residues 192 to 435 (KSFKDPSNNF…CLSQKLRQER (244 aa)) is interaction with CASP3. Positions 192–480 (KSFKDPSNNF…LRKKLIPSYT (289 aa)) are interaction with TRAF1 and TRAF2. Residues 217–480 (LGTQQEPVKK…LRKKLIPSYT (264 aa)) are interaction with CASP8 subunits p18 and p10. Residues 263 to 358 (ETELLRDTFT…AGKPKIFFIQ (96 aa)) form a caspase region. An interaction with CASP8 region spans residues 370–480 (SSLLEVDGPA…LRKKLIPSYT (111 aa)).

Belongs to the peptidase C14A family. As to quaternary structure, TNFRSF6 stimulation triggers recruitment to the death-inducing signaling complex (DISC) formed by TNFRSF6, FADD and CASP8. A proteolytic fragment (p43) stays associated with the DISC. Interacts with RIPK1. In terms of processing, proteolytically processed by CASP8 generating subunit p43 and p12.

Functionally, apoptosis regulator protein which may function as a crucial link between cell survival and cell death pathways in mammalian cells. Acts as an inhibitor of TNFRSF6 mediated apoptosis. A proteolytic fragment (p43) is likely retained in the death-inducing signaling complex (DISC) thereby blocking further recruitment and processing of caspase-8 at the complex. Full length and shorter isoforms have been shown either to induce apoptosis or to reduce TNFRSF-triggered apoptosis. Lacks enzymatic (caspase) activity. This chain is CASP8 and FADD-like apoptosis regulator (CFLAR), found in Pongo abelii (Sumatran orangutan).